The chain runs to 707 residues: Caprin-1 (707 aa).

Low complexity-rich tracts occupy residues M1–S15 and G22–G43. Residues M1–Q48 are disordered. An N-acetylproline modification is found at P2. The residue at position 10 (S10) is a Phosphoserine. Residues V58–D92 adopt a coiled-coil conformation. The residue at position 113 (S113) is a Phosphoserine. A coiled-coil region spans residues K123–Q151. R163 bears the Omega-N-methylarginine mark. Positions L325–Q347 are disordered. The span at Q326 to S335 shows a compositional bias: low complexity. S333 and S341 each carry phosphoserine. Residues Q358–E379 form a G3BP1-binding region. Disordered stretches follow at residues E412–S443, P523–E558, and T570–M620. Over residues P431–S443 the composition is skewed to polar residues. A compositionally biased stretch (low complexity) spans Q535–E558. The span at H572–Y603 shows a compositional bias: polar residues. Y623 bears the Phosphotyrosine mark. Residues R624 and R631 each carry the omega-N-methylarginine modification. Y634 and Y637 each carry phosphotyrosine. R638 carries the post-translational modification Omega-N-methylarginine. A compositionally biased stretch (polar residues) spans F641–N655. The segment at F641–N707 is disordered. O-linked (GlcNAc) serine glycosylation is found at S642 and S647. Y649, Y660, Y663, and Y668 each carry phosphotyrosine. 2 stretches are compositionally biased toward low complexity: residues R674–A684 and N695–N707. At R696 the chain carries Asymmetric dimethylarginine; alternate. Position 696 is an omega-N-methylarginine; alternate (R696).

Belongs to the caprin family. In terms of assembly, may form homomultimers. Interacts with G3BP1; interaction is direct and promotes stress granule formation. Interacts with G3BP2; interaction is direct and promotes stress granule formation. Interacts with PQBP1. Interacts with DDX3X. Interacts (when phosphorylated by EPHA4) with FMR1; interaction with FMR1 promotes formation of a membraneless compartment. Post-translationally, tyrosine phosphorylation by EPHA4 promotes interaction with FMR1 and liquid-liquid phase separation (LLPS) for the formation of a membraneless compartment that concentrates mRNAs with associated regulatory factors. In terms of processing, O-glycosylated (O-GlcNAcylated), in a cell cycle-dependent manner. O-glycosylation by OGT inhibit ability to undergo liquid-liquid phase separation (LLPS). As to expression, expressed in hippocampal and neocortical pyramidal neurons, but not in Purkinje cells.

It is found in the cytoplasm. The protein resides in the cytoplasmic ribonucleoprotein granule. It localises to the cytosol. The protein localises to the cell projection. Its subcellular location is the dendrite. It is found in the lamellipodium. Its activity is regulated as follows. Ability to mediate liquid-liquid phase separation is regulated by ATP: moderate concentrations of ATP enhance phase separation, whereas high concentrations of ATP lead to inhibition of phase separation. In terms of biological role, mRNA-binding protein that acts as a regulator of mRNAs transport, translation and/or stability, and which is involved in neurogenesis, synaptic plasticity in neurons and cell proliferation and migration in multiple cell types. Plays an essential role in cytoplasmic stress granule formation. Acts as an mRNA regulator by mediating formation of some phase-separated membraneless compartment: undergoes liquid-liquid phase separation upon binding to target mRNAs, leading to assemble mRNAs into cytoplasmic ribonucleoprotein granules that concentrate mRNAs with associated regulatory factors. Undergoes liquid-liquid phase separation following phosphorylation and interaction with FMR1, promoting formation of cytoplasmic ribonucleoprotein granules that concentrate mRNAs with factors that inhibit translation and mediate deadenylation of target mRNAs. In these cytoplasmic ribonucleoprotein granules, CAPRIN1 mediates recruitment of CNOT7 deadenylase, leading to mRNA deadenylation and degradation. Binds directly and selectively to MYC and CCND2 mRNAs. In neuronal cells, directly binds to several mRNAs associated with RNA granules, including BDNF, CAMK2A, CREB1, MAP2, NTRK2 mRNAs, as well as to GRIN1 and KPNB1 mRNAs, but not to rRNAs. The polypeptide is Caprin-1 (Caprin1) (Rattus norvegicus (Rat)).